Consider the following 488-residue polypeptide: ATP synthase subunit beta (488 aa).

155–162 (GGAGVGKT) contacts ATP. The disordered stretch occupies residues 467-488 (GFAPDDQNTDADEKPAAQAAAN).

It belongs to the ATPase alpha/beta chains family. As to quaternary structure, F-type ATPases have 2 components, CF(1) - the catalytic core - and CF(0) - the membrane proton channel. CF(1) has five subunits: alpha(3), beta(3), gamma(1), delta(1), epsilon(1). CF(0) has three main subunits: a(1), b(2) and c(9-12). The alpha and beta chains form an alternating ring which encloses part of the gamma chain. CF(1) is attached to CF(0) by a central stalk formed by the gamma and epsilon chains, while a peripheral stalk is formed by the delta and b chains.

Its subcellular location is the cell membrane. The enzyme catalyses ATP + H2O + 4 H(+)(in) = ADP + phosphate + 5 H(+)(out). In terms of biological role, produces ATP from ADP in the presence of a proton gradient across the membrane. The catalytic sites are hosted primarily by the beta subunits. The sequence is that of ATP synthase subunit beta from Lacticaseibacillus casei (strain BL23) (Lactobacillus casei).